The chain runs to 196 residues: Probable malonic semialdehyde reductase RutE (196 aa).

It belongs to the nitroreductase family. HadB/RutE subfamily. The cofactor is FMN.

The catalysed reaction is 3-hydroxypropanoate + NADP(+) = 3-oxopropanoate + NADPH + H(+). Functionally, may reduce toxic product malonic semialdehyde to 3-hydroxypropionic acid, which is excreted. The polypeptide is Probable malonic semialdehyde reductase RutE (Escherichia coli (strain SMS-3-5 / SECEC)).